Consider the following 325-residue polypeptide: Elongation factor P--(R)-beta-lysine ligase (325 aa).

Substrate is bound at residue 76-78 (SPE). Residues 100–102 (RNE) and N109 each bind ATP. Y118 lines the substrate pocket. Residue 244-245 (EL) participates in ATP binding. Residue E251 participates in substrate binding. G300 is an ATP binding site.

The protein belongs to the class-II aminoacyl-tRNA synthetase family. EpmA subfamily. As to quaternary structure, homodimer.

The catalysed reaction is D-beta-lysine + L-lysyl-[protein] + ATP = N(6)-((3R)-3,6-diaminohexanoyl)-L-lysyl-[protein] + AMP + diphosphate + H(+). Its function is as follows. With EpmB is involved in the beta-lysylation step of the post-translational modification of translation elongation factor P (EF-P). Catalyzes the ATP-dependent activation of (R)-beta-lysine produced by EpmB, forming a lysyl-adenylate, from which the beta-lysyl moiety is then transferred to the epsilon-amino group of a conserved specific lysine residue in EF-P. This chain is Elongation factor P--(R)-beta-lysine ligase, found in Enterobacter sp. (strain 638).